The following is a 187-amino-acid chain: Ribosome-recycling factor (187 aa).

Belongs to the RRF family.

The protein localises to the cytoplasm. Functionally, responsible for the release of ribosomes from messenger RNA at the termination of protein biosynthesis. May increase the efficiency of translation by recycling ribosomes from one round of translation to another. This Ruegeria pomeroyi (strain ATCC 700808 / DSM 15171 / DSS-3) (Silicibacter pomeroyi) protein is Ribosome-recycling factor.